We begin with the raw amino-acid sequence, 3135 residues long: Beauvericin nonribosomal cyclodepsipeptide synthetase BEA1 (3135 aa).

The condensation 1 stretch occupies residues 70–458 (HVAYEISNDI…QRLRGSPDKL (389 aa)). The interval 196-228 (LSNRPYTPESSDPEDDGLSLTPTDGSKTPETEG) is disordered. The tract at residues 499 to 896 (SLSPSKVAIC…GRMDSQVKIR (398 aa)) is adenylation 1. One can recognise a Carrier 1 domain in the interval 1021–1097 (STTTSSQSKL…GLEAIVNGSA (77 aa)). Serine 1058 is modified (O-(pantetheine 4'-phosphoryl)serine). Positions 1115–1542 (SYSQGRLWFL…NIPISVLPLT (428 aa)) are condensation 2. Residues 1571–1974 (FRTQVAAYPD…GRMDTQFKIR (404 aa)) are adenylation 2. The interval 2042–2182 (MYADIGDIDP…FPSPEYLAQV (141 aa)) is S-adenosyl-L-methionine-dependent N-methyltransferase. 2 consecutive Carrier domains span residues 2509-2583 (VPIS…REGL) and 2603-2677 (APRT…ESTD). O-(pantetheine 4'-phosphoryl)serine occurs at positions 2543 and 2637. The tract at residues 2721-3127 (QDMYQSTQMQ…QYFLEEVCNT (407 aa)) is condensation 3.

The protein belongs to the NRP synthetase family.

The catalysed reaction is 3 (R)-2-hydroxy-3-methylbutanoate + 3 L-phenylalanine + 3 S-adenosyl-L-methionine + 6 ATP = beauvericin + 6 AMP + 3 S-adenosyl-L-homocysteine + 6 diphosphate + 6 H(+). Beauvericin nonribosomal cyclodepsipeptide synthetase; part of the gene cluster that mediates the biosynthesis of beauvericin (BEA), a non-ribosomal cyclic hexadepsipeptide that shows antibiotic, antifungal, insecticidal, and cancer cell antiproliferative and antihaptotactic activity. Ketoisovalerate reductase BEA2 catalyzes the NADPH-specific reduction of ketoisovaleric acid to hydroxyisovalerate, a precursor for beauvericin biosynthesis. The nonribosomal cyclodepsipeptide synthetase BEA1 then catalyzes the formation of beauvericin via condensation and cyclization of 3 dipeptidol monomers, each composed of one unit of hydroxyisovalerate and one unit of N-methyl-phenylalanine. The protein is Beauvericin nonribosomal cyclodepsipeptide synthetase BEA1 of Gibberella fujikuroi (strain CBS 195.34 / IMI 58289 / NRRL A-6831) (Bakanae and foot rot disease fungus).